Consider the following 252-residue polypeptide: 5'-nucleotidase SurE (252 aa).

A divalent metal cation contacts are provided by D8, D9, S39, and N91.

Belongs to the SurE nucleotidase family. It depends on a divalent metal cation as a cofactor.

It localises to the cytoplasm. The enzyme catalyses a ribonucleoside 5'-phosphate + H2O = a ribonucleoside + phosphate. Functionally, nucleotidase that shows phosphatase activity on nucleoside 5'-monophosphates. The polypeptide is 5'-nucleotidase SurE (Legionella pneumophila (strain Paris)).